A 480-amino-acid polypeptide reads, in one-letter code: Glutamate--tRNA ligase (480 aa).

Residues 21–31 (PSPTGYLHVGG) carry the 'HIGH' region motif. Positions 110, 112, 137, and 139 each coordinate Zn(2+). The 'KMSKS' region motif lies at 248–252 (KLSKR). Lys251 is an ATP binding site.

The protein belongs to the class-I aminoacyl-tRNA synthetase family. Glutamate--tRNA ligase type 1 subfamily. Monomer. It depends on Zn(2+) as a cofactor.

The protein localises to the cytoplasm. It catalyses the reaction tRNA(Glu) + L-glutamate + ATP = L-glutamyl-tRNA(Glu) + AMP + diphosphate. Its function is as follows. Catalyzes the attachment of glutamate to tRNA(Glu) in a two-step reaction: glutamate is first activated by ATP to form Glu-AMP and then transferred to the acceptor end of tRNA(Glu). The protein is Glutamate--tRNA ligase of Histophilus somni (strain 129Pt) (Haemophilus somnus).